Reading from the N-terminus, the 298-residue chain is Ribosomal RNA small subunit methyltransferase H (298 aa).

S-adenosyl-L-methionine contacts are provided by residues 46–48 (GGH), D65, F92, D108, and H115.

The protein belongs to the methyltransferase superfamily. RsmH family.

The protein resides in the cytoplasm. The enzyme catalyses cytidine(1402) in 16S rRNA + S-adenosyl-L-methionine = N(4)-methylcytidine(1402) in 16S rRNA + S-adenosyl-L-homocysteine + H(+). Functionally, specifically methylates the N4 position of cytidine in position 1402 (C1402) of 16S rRNA. The sequence is that of Ribosomal RNA small subunit methyltransferase H from Nostoc punctiforme (strain ATCC 29133 / PCC 73102).